Here is an 800-residue protein sequence, read N- to C-terminus: Receptor like protein 26 (800 aa).

The N-terminal stretch at 1–19 (MRLHFCSLLLLYCIVFVSS) is a signal peptide. Residues 20 to 733 (FLTTDALACL…EEEDEVIEWK (714 aa)) are Extracellular-facing. Asn49, Asn61, Asn83, Asn96, Asn101, and Asn113 each carry an N-linked (GlcNAc...) asparagine glycan. LRR repeat units follow at residues 89–113 (LHQLRYLNLSHNNFTSSSLPSEFSN), 115–138 (TRLEVLSLASSSFTGQVPSSISNL), 139–161 (ILLTHLNLSHNELTGSFPPVRNL), 162–185 (TKLSFLDLSYNQFSGAIPFDLLPT), 187–212 (PFLSYLDLKKNHLTGSIDVPNSSSSS), 214–235 (LVRLSLGFNQFEGKIIEPISKL), 236–259 (INLNHLELASLNISHPIDLRVFAP), 260–281 (LKSLLVFDIRQNRLLPASLSSD), 285–307 (PLSLISLILIQCDIIEFPNIFKT), 308–332 (LQNLEHIDISNNLIKGKVPEWFWKL), 334–357 (RLSIANLVNNSLTGFEGSSEVLLN), and 358–381 (SSVQLLDFAYNSMTGAFPTPPLGS). 2 N-linked (GlcNAc...) asparagine glycosylation sites follow: Asn145 and Asn160. Asn207 carries an N-linked (GlcNAc...) asparagine glycan. N-linked (GlcNAc...) asparagine glycosylation occurs at Asn247. 2 N-linked (GlcNAc...) asparagine glycosylation sites follow: Asn342 and Asn357. The stretch at 382 to 401 (IYLSAWNNSFTGNIPLSICN) is one LRR 13; degenerate repeat. N-linked (GlcNAc...) asparagine glycosylation is found at Asn388 and Asn401. LRR repeat units follow at residues 402-423 (RSSLIVLDLSYNKFTGPIPQCL), 424-446 (SNLKVVNLRKNSLEGSIPDEFHS), 448-471 (AKTQTLDVGYNRLTGKLPKSLLNC), 472-494 (SSLRFLSVDNNRIEDTFPFWLKA), 495-519 (LPNLHVLTLRSNRFFGHLSPPDRGP), 522-546 (FPELRILELSDNSFTGSLPPNFFVN), 591-615 (LTFYSTIDFSGNKLEGQIPESIGLL), 616-639 (KELIALNLSNNAFTGHIPMSLANV), 640-663 (TELESLDLSRNQLSGNIPRELGSL), and 665-688 (FLAYISVAHNQLKGEIPQGPQFSG). A glycan (N-linked (GlcNAc...) asparagine) is linked at Asn470. N-linked (GlcNAc...) asparagine glycosylation is found at Asn622 and Asn638. Residues 734–754 (AVFFGYWPGLLLGLVMAHVIA) form a helical membrane-spanning segment. Topologically, residues 755–800 (SFKPKWFVKILGPAKGKQVDPVRLFMNLDSRWDSFNNKDTVEEEVI) are cytoplasmic.

The protein belongs to the RLP family.

Its subcellular location is the cell membrane. The chain is Receptor like protein 26 from Arabidopsis thaliana (Mouse-ear cress).